The following is a 370-amino-acid chain: 3-dehydroquinate synthase (370 aa).

Residues 112-116 (GVIGD), 136-137 (TT), lysine 149, lysine 158, and 176-179 (TLAT) each bind NAD(+). Residues glutamate 191, histidine 254, and histidine 276 each coordinate Zn(2+).

The protein belongs to the sugar phosphate cyclases superfamily. Dehydroquinate synthase family. Co(2+) is required as a cofactor. Requires Zn(2+) as cofactor. It depends on NAD(+) as a cofactor.

It localises to the cytoplasm. It carries out the reaction 7-phospho-2-dehydro-3-deoxy-D-arabino-heptonate = 3-dehydroquinate + phosphate. It functions in the pathway metabolic intermediate biosynthesis; chorismate biosynthesis; chorismate from D-erythrose 4-phosphate and phosphoenolpyruvate: step 2/7. Its function is as follows. Catalyzes the conversion of 3-deoxy-D-arabino-heptulosonate 7-phosphate (DAHP) to dehydroquinate (DHQ). The protein is 3-dehydroquinate synthase of Xylella fastidiosa (strain M12).